We begin with the raw amino-acid sequence, 434 residues long: Nicotinate phosphoribosyltransferase (434 aa).

His-242 bears the Phosphohistidine; by autocatalysis mark.

The protein belongs to the NAPRTase family. In terms of processing, transiently phosphorylated on a His residue during the reaction cycle. Phosphorylation strongly increases the affinity for substrates and increases the rate of nicotinate D-ribonucleotide production. Dephosphorylation regenerates the low-affinity form of the enzyme, leading to product release.

The enzyme catalyses nicotinate + 5-phospho-alpha-D-ribose 1-diphosphate + ATP + H2O = nicotinate beta-D-ribonucleotide + ADP + phosphate + diphosphate. Its pathway is cofactor biosynthesis; NAD(+) biosynthesis; nicotinate D-ribonucleotide from nicotinate: step 1/1. In terms of biological role, catalyzes the synthesis of beta-nicotinate D-ribonucleotide from nicotinate and 5-phospho-D-ribose 1-phosphate at the expense of ATP. In Bartonella tribocorum (strain CIP 105476 / IBS 506), this protein is Nicotinate phosphoribosyltransferase.